Reading from the N-terminus, the 766-residue chain is MGEVQLVLAVTAILISFKCLLIPAYVSTDFEVHRNWMAVTWQRPLCEWYTEATSEWTLDYPPFFAYFELGLASVAHFFGFDECLVISKTPRFSRRILIFQRFSVIFCDILYIAVCALYSFRSPRLVSRIPKKLQQNGREACFVLLASLQALIICDSIHFQYNSMLTAIFLMSLFFIDTERYLMAALSYSILLNFKHIYVYYALGYVFYYLVNYFQFSGNVLLANTPKAISLAIALLIPFCASIFPFIHASGVQGLQNIATRLFPVSRGLTHAYWAPNFWALYNFADLCLYRVLSLLKIGKFDAPTYTSGLVQEYSHSVLPNVSPMGTLCLVVISSMIVLTGLVIRRKDSADFSLFAVFSAFCFFYFGYHVHEKAIILVTVPMTVFAIKNPKYHSILIHLTCIASFSLFPLLFTPFETLLKYAICVSYFFIQLVFLKRVTLMPLSDLIPTRHVASWLLMGMVEVYNTFLHKWLWTSRLPFAPLMAISILTAIELTGLIGALIWSTFGDGIFEIWWAKATCQIRERLIRDSTYSVQAVEDLDDVKLVAGIDTSAAKLNSDMVYISVSFWTYPDLKHVATISDTRMLELPYIPQYLAVREAEVMADFLKSVITERPELRPDVILCDGFGEFHSRGCGMACHVGALSGIASIGVAKNLTLHHTYETIGMENKSKVDSFVEHCREVYKNNKTSPGFIPFDIVEPVVLNILRMGSSMNGVFVSAGYGIDLELSTEICSQLLLNNTTIEPIRAADLESRRLVRENFDGNEKLE.

The next 12 membrane-spanning stretches (helical) occupy residues 6-26, 60-80, 96-116, 156-176, 190-210, 228-248, 324-344, 350-370, 395-415, 423-443, 452-472, and 482-502; these read LVLA…PAYV, YPPF…FFGF, ILIF…AVCA, SIHF…LFFI, ILLN…FYYL, AISL…PFIH, PMGT…GLVI, ADFS…GYHV, ILIH…FTPF, ICVS…LMPL, VASW…HKWL, and LMAI…ALIW.

The protein belongs to the ALG6/ALG8 glucosyltransferase family.

Its subcellular location is the endoplasmic reticulum membrane. It carries out the reaction an alpha-D-Glc-(1-&gt;3)-alpha-D-Man-(1-&gt;2)-alpha-D-Man-(1-&gt;2)-alpha-D-Man-(1-&gt;3)-[alpha-D-Man-(1-&gt;2)-alpha-D-Man-(1-&gt;3)-[alpha-D-Man-(1-&gt;2)-alpha-D-Man-(1-&gt;6)]-alpha-D-Man-(1-&gt;6)]-beta-D-Man-(1-&gt;4)-beta-D-GlcNAc-(1-&gt;4)-alpha-D-GlcNAc-diphospho-di-trans,poly-cis-dolichol + a di-trans,poly-cis-dolichyl beta-D-glucosyl phosphate = an alpha-D-Glc-(1-&gt;3)-alpha-D-Glc-(1-&gt;3)-alpha-D-Man-(1-&gt;2)-alpha-D-Man-(1-&gt;2)-alpha-D-Man-(1-&gt;3)-[alpha-D-Man-(1-&gt;2)-alpha-D-Man-(1-&gt;3)-[alpha-D-Man-(1-&gt;2)-alpha-D-Man-(1-&gt;6)]-alpha-D-Man-(1-&gt;6)]-beta-D-Man-(1-&gt;4)-beta-D-GlcNAc-(1-&gt;4)-alpha-D-GlcNAc-diphospho-di-trans,poly-cis-dolichol + a di-trans,poly-cis-dolichyl phosphate + H(+). The protein operates within protein modification; protein glycosylation. In terms of biological role, dolichyl pyrophosphate Glc1Man9GlcNAc2 alpha-1,3-glucosyltransferase that operates in the biosynthetic pathway of dolichol-linked oligosaccharides, the glycan precursors employed in protein asparagine (N)-glycosylation. The assembly of dolichol-linked oligosaccharides begins on the cytosolic side of the endoplasmic reticulum membrane and finishes in its lumen. The sequential addition of sugars to dolichol pyrophosphate produces dolichol-linked oligosaccharides containing fourteen sugars, including two GlcNAcs, nine mannoses and three glucoses. Once assembled, the oligosaccharide is transferred from the lipid to nascent proteins by oligosaccharyltransferases. In the lumen of the endoplasmic reticulum, adds the second glucose residue from dolichyl phosphate glucose (Dol-P-Glc) onto the lipid-linked oligosaccharide intermediate Glc(1)Man(9)GlcNAc(2)-PP-Dol to produce Glc(2)Man(9)GlcNAc(2)-PP-Dol. The polypeptide is Dolichyl pyrophosphate Glc1Man9GlcNAc2 alpha-1,3-glucosyltransferase (Caenorhabditis elegans).